A 435-amino-acid chain; its full sequence is Elongation factor 1-alpha (435 aa).

One can recognise a tr-type G domain in the interval 6–231 (KVHINLVVIG…DALEPPKRPV (226 aa)). The tract at residues 15 to 22 (GHVDSGKS) is G1. 15–22 (GHVDSGKS) contributes to the GTP binding site. The interval 71-75 (GITID) is G2. Residues 92-95 (DAPG) form a G3 region. Residues 92–96 (DAPGH) and 154–157 (NKMD) contribute to the GTP site. A G4 region spans residues 154–157 (NKMD). The G5 stretch occupies residues 195-197 (SGF).

This sequence belongs to the TRAFAC class translation factor GTPase superfamily. Classic translation factor GTPase family. EF-Tu/EF-1A subfamily.

The protein resides in the cytoplasm. In terms of biological role, this protein promotes the GTP-dependent binding of aminoacyl-tRNA to the A-site of ribosomes during protein biosynthesis. The protein is Elongation factor 1-alpha of Tetrahymena pyriformis.